The primary structure comprises 489 residues: Glutamate--tRNA ligase (489 aa).

The short motif at 12 to 22 (PSPTGIPHVGM) is the 'HIGH' region element. Residues 256–260 (KLSKR) carry the 'KMSKS' region motif. Lysine 259 contributes to the ATP binding site.

The protein belongs to the class-I aminoacyl-tRNA synthetase family. Glutamate--tRNA ligase type 1 subfamily. Monomer.

It is found in the cytoplasm. The enzyme catalyses tRNA(Glu) + L-glutamate + ATP = L-glutamyl-tRNA(Glu) + AMP + diphosphate. Catalyzes the attachment of glutamate to tRNA(Glu) in a two-step reaction: glutamate is first activated by ATP to form Glu-AMP and then transferred to the acceptor end of tRNA(Glu). In Mycobacterium ulcerans (strain Agy99), this protein is Glutamate--tRNA ligase.